Here is a 204-residue protein sequence, read N- to C-terminus: Urease accessory protein UreG (204 aa).

Glycine 12 to threonine 19 provides a ligand contact to GTP.

This sequence belongs to the SIMIBI class G3E GTPase family. UreG subfamily. In terms of assembly, homodimer. UreD, UreF and UreG form a complex that acts as a GTP-hydrolysis-dependent molecular chaperone, activating the urease apoprotein by helping to assemble the nickel containing metallocenter of UreC. The UreE protein probably delivers the nickel.

It is found in the cytoplasm. Facilitates the functional incorporation of the urease nickel metallocenter. This process requires GTP hydrolysis, probably effectuated by UreG. The protein is Urease accessory protein UreG of Pseudomonas paraeruginosa (strain DSM 24068 / PA7) (Pseudomonas aeruginosa (strain PA7)).